The following is a 536-amino-acid chain: Light-independent protochlorophyllide reductase subunit B (536 aa).

Asp-36 contributes to the [4Fe-4S] cluster binding site. Asp-292 acts as the Proton donor in catalysis. Position 427–428 (427–428 (GL)) interacts with substrate. A compositionally biased stretch (low complexity) spans 448–469 (SHLGHLGGHQSQTEQQQSQAAT). Residues 448–489 (SHLGHLGGHQSQTEQQQSQAATNPSTQSNADSSSEESPLWTP) are disordered. The segment covering 470 to 483 (NPSTQSNADSSSEE) has biased composition (polar residues).

Belongs to the ChlB/BchB/BchZ family. As to quaternary structure, protochlorophyllide reductase is composed of three subunits; ChlL, ChlN and ChlB. Forms a heterotetramer of two ChlB and two ChlN subunits. Requires [4Fe-4S] cluster as cofactor.

The catalysed reaction is chlorophyllide a + oxidized 2[4Fe-4S]-[ferredoxin] + 2 ADP + 2 phosphate = protochlorophyllide a + reduced 2[4Fe-4S]-[ferredoxin] + 2 ATP + 2 H2O. Its pathway is porphyrin-containing compound metabolism; chlorophyll biosynthesis (light-independent). In terms of biological role, component of the dark-operative protochlorophyllide reductase (DPOR) that uses Mg-ATP and reduced ferredoxin to reduce ring D of protochlorophyllide (Pchlide) to form chlorophyllide a (Chlide). This reaction is light-independent. The NB-protein (ChlN-ChlB) is the catalytic component of the complex. The chain is Light-independent protochlorophyllide reductase subunit B from Prochlorococcus marinus (strain MIT 9313).